We begin with the raw amino-acid sequence, 255 residues long: tRNA (guanine-N(7)-)-methyltransferase (255 aa).

The tract at residues 1 to 21 (MMHDDPNEAGLPPHDDAIPDE) is disordered. Positions 86, 111, 138, and 161 each coordinate S-adenosyl-L-methionine. Residue Asp161 is part of the active site. Substrate contacts are provided by residues Lys165, Asp197, and 232-235 (TKFE).

It belongs to the class I-like SAM-binding methyltransferase superfamily. TrmB family.

The catalysed reaction is guanosine(46) in tRNA + S-adenosyl-L-methionine = N(7)-methylguanosine(46) in tRNA + S-adenosyl-L-homocysteine. Its pathway is tRNA modification; N(7)-methylguanine-tRNA biosynthesis. Catalyzes the formation of N(7)-methylguanine at position 46 (m7G46) in tRNA. In Burkholderia lata (strain ATCC 17760 / DSM 23089 / LMG 22485 / NCIMB 9086 / R18194 / 383), this protein is tRNA (guanine-N(7)-)-methyltransferase.